Consider the following 255-residue polypeptide: 4-diphosphocytidyl-2-C-methyl-D-erythritol kinase (255 aa).

Residue lysine 6 is part of the active site. ATP is bound at residue 95 to 105; it reads PVCAGLGGGSS. Residue aspartate 137 is part of the active site.

This sequence belongs to the GHMP kinase family. IspE subfamily.

The catalysed reaction is 4-CDP-2-C-methyl-D-erythritol + ATP = 4-CDP-2-C-methyl-D-erythritol 2-phosphate + ADP + H(+). It functions in the pathway isoprenoid biosynthesis; isopentenyl diphosphate biosynthesis via DXP pathway; isopentenyl diphosphate from 1-deoxy-D-xylulose 5-phosphate: step 3/6. Its function is as follows. Catalyzes the phosphorylation of the position 2 hydroxy group of 4-diphosphocytidyl-2C-methyl-D-erythritol. This Campylobacter jejuni subsp. jejuni serotype O:23/36 (strain 81-176) protein is 4-diphosphocytidyl-2-C-methyl-D-erythritol kinase.